We begin with the raw amino-acid sequence, 137 residues long: Large ribosomal subunit protein uL16 (137 aa).

This sequence belongs to the universal ribosomal protein uL16 family. Part of the 50S ribosomal subunit.

Functionally, binds 23S rRNA and is also seen to make contacts with the A and possibly P site tRNAs. The protein is Large ribosomal subunit protein uL16 of Bradyrhizobium sp. (strain BTAi1 / ATCC BAA-1182).